Reading from the N-terminus, the 135-residue chain is ATP synthase epsilon chain (135 aa).

The interval 101-122 (TAVTKLEGQPSTPEKVKAQQLF) is disordered.

Belongs to the ATPase epsilon chain family. F-type ATPases have 2 components, CF(1) - the catalytic core - and CF(0) - the membrane proton channel. CF(1) has five subunits: alpha(3), beta(3), gamma(1), delta(1), epsilon(1). CF(0) has three main subunits: a, b and c.

Its subcellular location is the cellular thylakoid membrane. Functionally, produces ATP from ADP in the presence of a proton gradient across the membrane. This is ATP synthase epsilon chain from Synechococcus sp. (strain CC9311).